Here is a 374-residue protein sequence, read N- to C-terminus: Alginate lyase (374 aa).

Positions 1–23 (MHKTRLALSCLLGSLLLSGAVHA) are cleaved as a signal peptide. Substrate contacts are provided by residues 62-63 (SK), 135-136 (HT), and tyrosine 253.

The protein belongs to the polysaccharide lyase 5 family.

It is found in the periplasm. It catalyses the reaction Eliminative cleavage of alginate to give oligosaccharides with 4-deoxy-alpha-L-erythro-hex-4-enuronosyl groups at their non-reducing ends and beta-D-mannuronate at their reducing end.. Catalyzes the depolymerization of alginate by cleaving the beta-1,4 glycosidic bond between two adjacent sugar residues via a beta-elimination mechanism. May serve to degrade mislocalized alginate that is trapped in the periplasmic space. This Azotobacter vinelandii (strain DJ / ATCC BAA-1303) protein is Alginate lyase.